A 403-amino-acid polypeptide reads, in one-letter code: Tyrosine--tRNA ligase (403 aa).

Residues 45 to 54 (PTAPDLHLGH) carry the 'HIGH' region motif. The short motif at 229–233 (KMSKS) is the 'KMSKS' region element. K232 contacts ATP. Residues 341–402 (VLLGRLLAEA…GKRRFARIVF (62 aa)) form the S4 RNA-binding domain.

This sequence belongs to the class-I aminoacyl-tRNA synthetase family. TyrS type 2 subfamily. Homodimer.

Its subcellular location is the cytoplasm. It carries out the reaction tRNA(Tyr) + L-tyrosine + ATP = L-tyrosyl-tRNA(Tyr) + AMP + diphosphate + H(+). Functionally, catalyzes the attachment of tyrosine to tRNA(Tyr) in a two-step reaction: tyrosine is first activated by ATP to form Tyr-AMP and then transferred to the acceptor end of tRNA(Tyr). The polypeptide is Tyrosine--tRNA ligase (Geobacter metallireducens (strain ATCC 53774 / DSM 7210 / GS-15)).